We begin with the raw amino-acid sequence, 286 residues long: Rhomboid-type serine protease 2 (286 aa).

The next 6 membrane-spanning stretches (helical) occupy residues 18 to 38 (ITQYPALTVGLSVFTFLLLVI), 66 to 86 (SFYLLFHRGFTHWLLNVVGLF), 99 to 119 (VFTGVTLNVLAVTAGLQFCIV), 122 to 142 (LLYPNTQVIGLSGVVFSFMSF), 164 to 183 (VSIPTLYSPFIFLIVCMVLI), and 188 to 210 (FWGHLAGISSGYLLALGYIKFLY). S133 acts as the Nucleophile in catalysis. H191 is an active-site residue.

Belongs to the peptidase S54 family.

The protein resides in the golgi apparatus membrane. The protein localises to the golgi apparatus. It is found in the cis-Golgi network membrane. The catalysed reaction is Cleaves type-1 transmembrane domains using a catalytic dyad composed of serine and histidine that are contributed by different transmembrane domains.. In terms of biological role, probable rhomboid-type serine protease that catalyzes intramembrane proteolysis. The sequence is that of Rhomboid-type serine protease 2 (RBD2) from Debaryomyces hansenii (strain ATCC 36239 / CBS 767 / BCRC 21394 / JCM 1990 / NBRC 0083 / IGC 2968) (Yeast).